The following is a 417-amino-acid chain: Tyrosine--tRNA ligase (417 aa).

An L-tyrosine-binding site is contributed by tyrosine 39. Positions 44–53 match the 'HIGH' region motif; sequence ATATSLHIGN. Positions 176 and 180 each coordinate L-tyrosine. Positions 236 to 240 match the 'KMSKS' region motif; it reads KMGKS. Position 239 (lysine 239) interacts with ATP. The 67-residue stretch at 350-416 folds into the S4 RNA-binding domain; sequence IGILSLLVTA…GKKKHVLVRP (67 aa).

The protein belongs to the class-I aminoacyl-tRNA synthetase family. TyrS type 1 subfamily. Homodimer.

The protein resides in the cytoplasm. It carries out the reaction tRNA(Tyr) + L-tyrosine + ATP = L-tyrosyl-tRNA(Tyr) + AMP + diphosphate + H(+). Its function is as follows. Catalyzes the attachment of tyrosine to tRNA(Tyr) in a two-step reaction: tyrosine is first activated by ATP to form Tyr-AMP and then transferred to the acceptor end of tRNA(Tyr). The chain is Tyrosine--tRNA ligase from Mesorhizobium japonicum (strain LMG 29417 / CECT 9101 / MAFF 303099) (Mesorhizobium loti (strain MAFF 303099)).